Consider the following 381-residue polypeptide: 2-oxoglutarate-dependent dioxygenase FGSG_00048 (381 aa).

Belongs to the iron/ascorbate-dependent oxidoreductase family. Fe(2+) serves as cofactor.

The protein operates within mycotoxin biosynthesis. 2-oxoglutarate-dependent dioxygenase; part of the gene cluster that mediates the biosynthesis of gramillins A and B, bicyclic lipopeptides that induce cell death in maize leaves but not in wheat leaves. The nonribosomal peptide synthetase GRA1 incorporates respectively a glutamic adic (Glu), a leucine (Leu), a serine (Ser), a hydroxyglutamine (HOGln), a 2-amino decanoic acid, and 2 cysteins (CysB and CysA). The biosynthesis of 2-amino decanoic acid incorporated in gramillins could be initiated by a fatty acid synthase composed of the alpha and beta subunits FGSG_00036 and FGSG_11656. The cytochrome P450 monooxygenase FGSG_15680 could hydroxylate the fatty acid chain. Subsequent oxidation to the ketone by the oxidoreductase FGSG_00048 and transamination by aminotransferase FGSG_00049 could form 2-amino-decanoic acid. On the other hand, FGSG_15680 could also be responsible for the HO-modified glutamine at the gamma-position. Whether hydroxylation occurs on the fully assembled product or on the Gln residue prior to assembly into the gramillins requires further proof. The thioredoxin FGSG_00043 could also be required for the disulfide-bond formation between CysA and CysB. The specific involvement of the remaining proteins from the cluster is more difficult to discern, but could have broader regulatory (FGSG_00040 and FGSG_11657) or enzymatic functions (FGSG_00044 and FGSG_00045). The final C-domain of GRA1 does not possess the expected sequence of a termination CT domain, often implicated in macrocyclization and release of a cyclopeptidein fungal NRPs; and the thioesterase FGSG_00047 may act in concert with the terminal C-domain of GRA1 to catalyze the formation of the macrocyclic anhydride and release of the products. This chain is 2-oxoglutarate-dependent dioxygenase FGSG_00048, found in Gibberella zeae (strain ATCC MYA-4620 / CBS 123657 / FGSC 9075 / NRRL 31084 / PH-1) (Wheat head blight fungus).